Consider the following 459-residue polypeptide: Argininosuccinate lyase (459 aa).

Belongs to the lyase 1 family. Argininosuccinate lyase subfamily.

The protein localises to the cytoplasm. The enzyme catalyses 2-(N(omega)-L-arginino)succinate = fumarate + L-arginine. Its pathway is amino-acid biosynthesis; L-arginine biosynthesis; L-arginine from L-ornithine and carbamoyl phosphate: step 3/3. This is Argininosuccinate lyase from Prochlorococcus marinus (strain AS9601).